Here is a 493-residue protein sequence, read N- to C-terminus: Na(+)/H(+) antiporter subunit D (493 aa).

A run of 14 helical transmembrane segments spans residues 4–23 (LVIL…ILFA), 30–52 (RVIS…VDVY), 72–94 (LVAD…VCLF), 107–126 (YYFY…AFLT), 130–149 (FNLF…LIVL), 162–184 (YVVI…YSIT), 204–226 (VLNV…FPLY), 233–255 (YFGP…GIYA), 270–292 (FTHT…GAVS), 299–321 (ILSY…YTQL), 325–347 (GAIY…AGAT), 368–390 (WLAW…SGFF), 405–427 (YIIA…KIFI), and 448–470 (LLLP…EPIF).

Belongs to the CPA3 antiporters (TC 2.A.63) subunit D family. In terms of assembly, forms a heterooligomeric complex that consists of seven subunits: MrpA, MrpB, MrpC, MrpD, MrpE, MrpF and MrpG.

Its subcellular location is the cell membrane. Mnh complex is a Na(+)Li(+)/H(+) antiporter involved in Na(+) and/or Li(+) excretion and Na(+) resistance. Na(+)/H(+) antiport consumes a transmembrane electrical potential, and is thus inferred to be electrogenic. Does not transport K(+), Ca(2+) or Mg(2+). In terms of biological role, mrp complex is a Na(+)/H(+) antiporter involved in Na(+) excretion and Na(+) resistance. This Alkalihalophilus pseudofirmus (strain ATCC BAA-2126 / JCM 17055 / OF4) (Bacillus pseudofirmus) protein is Na(+)/H(+) antiporter subunit D (mrpD).